A 268-amino-acid polypeptide reads, in one-letter code: Chymotrypsin-C (268 aa).

Positions 1–16 (MLGITVFTTFLAYASS) are cleaved as a signal peptide. The propeptide at 17-29 (CGAPIFQPNLSAR) is activation peptide. 5 disulfides stabilise this stretch: Cys-17–Cys-141, Cys-59–Cys-75, Cys-155–Cys-222, Cys-186–Cys-202, and Cys-212–Cys-243. Residue Asn-25 is glycosylated (N-linked (GlcNAc...) asparagine). In terms of domain architecture, Peptidase S1 spans 30–268 (VVGGEDAIPH…IDWINQKLQL (239 aa)). Active-site charge relay system residues include His-74 and Asp-121. Catalysis depends on Ser-216, which acts as the Charge relay system.

This sequence belongs to the peptidase S1 family. Elastase subfamily. In terms of assembly, monomer. The zymogen is secreted as a ternary complex composed of procarboxypeptidase A, chymotrypsinogen C and proproteinase E. In terms of tissue distribution, pancreas.

It is found in the secreted. The protein localises to the extracellular space. It carries out the reaction Preferential cleavage: Leu-|-Xaa, Tyr-|-Xaa, Phe-|-Xaa, Met-|-Xaa, Trp-|-Xaa, Gln-|-Xaa, Asn-|-Xaa.. In terms of biological role, regulates activation and degradation of trypsinogens and procarboxypeptidases by targeting specific cleavage sites within their zymogen precursors. Has chymotrypsin-type protease activity and hypocalcemic activity. In Bos taurus (Bovine), this protein is Chymotrypsin-C (CTRC).